Consider the following 119-residue polypeptide: Large ribosomal subunit protein uL14 (119 aa).

It belongs to the universal ribosomal protein uL14 family. Part of the 50S ribosomal subunit. Forms a cluster with proteins L3 and L19. In the 70S ribosome, L14 and L19 interact and together make contacts with the 16S rRNA in bridges B5 and B8.

Functionally, binds to 23S rRNA. Forms part of two intersubunit bridges in the 70S ribosome. In Ehrlichia chaffeensis (strain ATCC CRL-10679 / Arkansas), this protein is Large ribosomal subunit protein uL14.